Reading from the N-terminus, the 549-residue chain is Probable protein kinase UbiB (549 aa).

One can recognise a Protein kinase domain in the interval 123–501; sequence DFDETPLASA…QQQAHKSNYL (379 aa). Residues 129-137 and Lys152 contribute to the ATP site; that span reads LASASISQV. The active-site Proton acceptor is Asp287. 2 helical membrane-spanning segments follow: residues 498-518 and 520-540; these read SNYLLITSAILLICGTLLFNQ and ATLWSPYVCLISGAVLWIIGW.

It belongs to the ABC1 family. UbiB subfamily.

The protein resides in the cell inner membrane. Its pathway is cofactor biosynthesis; ubiquinone biosynthesis [regulation]. Is probably a protein kinase regulator of UbiI activity which is involved in aerobic coenzyme Q (ubiquinone) biosynthesis. This chain is Probable protein kinase UbiB, found in Shewanella sp. (strain ANA-3).